The primary structure comprises 444 residues: UDP-N-acetylmuramate--L-alanine ligase (444 aa).

Residue 110–116 (GAHGKTS) participates in ATP binding.

Belongs to the MurCDEF family. Phosphorylated by StkP in vitro. Dephosphorylated by PhpP in vitro.

The protein resides in the cytoplasm. The catalysed reaction is UDP-N-acetyl-alpha-D-muramate + L-alanine + ATP = UDP-N-acetyl-alpha-D-muramoyl-L-alanine + ADP + phosphate + H(+). The protein operates within cell wall biogenesis; peptidoglycan biosynthesis. Cell wall formation. This Streptococcus pneumoniae serotype 4 (strain ATCC BAA-334 / TIGR4) protein is UDP-N-acetylmuramate--L-alanine ligase.